Consider the following 596-residue polypeptide: Neuroepithelial cell-transforming gene 1 protein (596 aa).

Position 1 is an N-acetylmethionine (Met-1). The segment at 1-44 (MEPELAAQKQPRPRRRSRRASGLSTEGATGPSADTSGSELDGRC) is disordered. The segment at 1 to 74 (MEPELAAQKQ…LKRKRREKDD (74 aa)) is necessary for nuclear localization. The Nuclear localization signal signature appears at 12 to 19 (RPRRRSRR). Residues Ser-21 and Ser-32 each carry the phosphoserine modification. A compositionally biased stretch (polar residues) spans 22–38 (GLSTEGATGPSADTSGS). Residues 66–72 (KRKRREK) carry the Nuclear localization signal motif. 3 positions are modified to phosphoserine: Ser-100, Ser-106, and Ser-122. The segment at 127–146 (GDHRSPASAQKFSSRSTVPT) is disordered. The segment covering 133–145 (ASAQKFSSRSTVP) has biased composition (polar residues). The DH domain maps to 174-356 (RRQEAIYEMS…QGVLSDINLK (183 aa)). Residues 386-501 (VLLCHGELRS…WFNCIRAAIA (116 aa)) form the PH domain. A Phosphoserine modification is found at Ser-508. Residues 562–596 (MAEDSKSLKTHQTQPGIRRARDKALSGGKRKETLV) are disordered.

In terms of assembly, interacts with RHOA in its GTP- and GDP-bound states, and with CDC42 in its GTP-bound state. Interacts with the PDZ 1 domain of BAIAP1. Widely expressed.

It is found in the cytoplasm. It localises to the nucleus. In terms of biological role, acts as a guanine nucleotide exchange factor (GEF) for RhoA GTPase. May be involved in activation of the SAPK/JNK pathway Stimulates genotoxic stress-induced RHOB activity in breast cancer cells leading to their cell death. This is Neuroepithelial cell-transforming gene 1 protein (NET1) from Homo sapiens (Human).